The following is a 195-amino-acid chain: Imidazoleglycerol-phosphate dehydratase (195 aa).

Belongs to the imidazoleglycerol-phosphate dehydratase family.

It localises to the cytoplasm. It catalyses the reaction D-erythro-1-(imidazol-4-yl)glycerol 3-phosphate = 3-(imidazol-4-yl)-2-oxopropyl phosphate + H2O. Its pathway is amino-acid biosynthesis; L-histidine biosynthesis; L-histidine from 5-phospho-alpha-D-ribose 1-diphosphate: step 6/9. The protein is Imidazoleglycerol-phosphate dehydratase of Burkholderia pseudomallei (strain 1710b).